The primary structure comprises 363 residues: DNA polymerase IV (363 aa).

The UmuC domain occupies 14–197; it reads IIHIDMDAFF…LPVEKFHGVG (184 aa). Mg(2+) is bound by residues Asp18 and Asp115. The active site involves Glu116.

The protein belongs to the DNA polymerase type-Y family. Monomer. It depends on Mg(2+) as a cofactor.

Its subcellular location is the cytoplasm. It catalyses the reaction DNA(n) + a 2'-deoxyribonucleoside 5'-triphosphate = DNA(n+1) + diphosphate. Its function is as follows. Poorly processive, error-prone DNA polymerase involved in untargeted mutagenesis. Copies undamaged DNA at stalled replication forks, which arise in vivo from mismatched or misaligned primer ends. These misaligned primers can be extended by PolIV. Exhibits no 3'-5' exonuclease (proofreading) activity. May be involved in translesional synthesis, in conjunction with the beta clamp from PolIII. The chain is DNA polymerase IV from Lactococcus lactis subsp. lactis (strain IL1403) (Streptococcus lactis).